The chain runs to 46 residues: Large ribosomal subunit protein bL34 (46 aa).

This sequence belongs to the bacterial ribosomal protein bL34 family.

The chain is Large ribosomal subunit protein bL34 (rpmH) from Mycobacterium avium.